The chain runs to 314 residues: Serine hydrolase-like protein 2 (314 aa).

Residues 33-293 form the AB hydrolase-1 domain; sequence PPVLCLHGWL…GNHCVHMSEP (261 aa). Residue S108 is part of the active site.

This sequence belongs to the AB hydrolase superfamily.

It is found in the cytoplasm. Its subcellular location is the perinuclear region. The protein resides in the peroxisome. Functionally, probable serine hydrolase. May be related to cell muscle hypertrophy. In Homo sapiens (Human), this protein is Serine hydrolase-like protein 2 (SERHL2).